Reading from the N-terminus, the 395-residue chain is Selection and upkeep of intraepithelial T-cells protein 7 (395 aa).

An N-terminal signal peptide occupies residues 1–25; that stretch reads MMKPEFFCFSGFCVYFLFLQVVVSS. Positions 26–141 constitute an Ig-like V-type domain; that stretch reads EKLRVTTPTR…DAAIMNLNVT (116 aa). Residues 26 to 248 lie on the Extracellular side of the membrane; sequence EKLRVTTPTR…FNRDRIWMES (223 aa). Cys-49 and Cys-123 form a disulfide bridge. Asn-92 and Asn-139 each carry an N-linked (GlcNAc...) asparagine glycan. The region spanning 142 to 233 is the Ig-like C1-type domain; that stretch reads AVGLETEIHV…TGEEKQTSII (92 aa). Residues Cys-163 and Cys-217 are joined by a disulfide bond. The helical transmembrane segment at 249-269 threads the bilayer; sequence LASIVWIMLSVYILYIICFYW. At 270-287 the chain is on the cytoplasmic side; sequence RTGCASGCLSKCFCVVTS. A helical transmembrane segment spans residues 288 to 308; it reads WPVQIVHLLFCTGTFFAIYLP. Residues 309–329 lie on the Extracellular side of the membrane; sequence HRSRVSLSDPQFPLYNNWITE. The chain crosses the membrane as a helical span at residues 330 to 350; that stretch reads LLFVILFLTICFALPIILLFI. Residues 351–395 are Cytoplasmic-facing; that stretch reads QFQFTSLTKWEKNKDGIMDQPRLGKAHETSSLYRKKTGKSWEQEK. The tract at residues 371–395 is disordered; it reads PRLGKAHETSSLYRKKTGKSWEQEK.

It belongs to the SKINT family. Expressed in skin, thymus, testis and, to a lower extent, bladder.

The protein resides in the membrane. In terms of biological role, may act by engaging a cell surface molecule on immature T-cells in the embryonic thymus. This chain is Selection and upkeep of intraepithelial T-cells protein 7 (Skint7), found in Mus musculus (Mouse).